The sequence spans 857 residues: DNA mismatch repair protein MutS (857 aa).

608 to 615 (GPNMSGKS) is an ATP binding site.

This sequence belongs to the DNA mismatch repair MutS family.

In terms of biological role, this protein is involved in the repair of mismatches in DNA. It is possible that it carries out the mismatch recognition step. This protein has a weak ATPase activity. The protein is DNA mismatch repair protein MutS of Lactobacillus johnsonii (strain CNCM I-12250 / La1 / NCC 533).